The following is a 123-amino-acid chain: MKTILGFKGLFYLHSLIWTCAGDWSAIQVHCTQFWFFARIKPTIFYNLYVNPDEVFLGDGCHVTHVLPNVYYEFFYHPHDCGIVTQPLQEVLLLKTKIRYISRDSTVRSEMPLSCVVHKQKCQ.

The first 26 residues, 1–26 (MKTILGFKGLFYLHSLIWTCAGDWSA), serve as a signal peptide directing secretion.

Belongs to the PLAC1 family.

Its subcellular location is the secreted. Its function is as follows. May be involved in cell differentiation. In Homo sapiens (Human), this protein is Putative oocyte-secreted protein 1 homolog (OOSP1).